The following is a 185-amino-acid chain: Ribosome maturation factor RimM (185 aa).

The region spanning 106–185 (SGEYYWKDLL…IIEVDWDPGF (80 aa)) is the PRC barrel domain.

Belongs to the RimM family. As to quaternary structure, binds ribosomal protein uS19.

It is found in the cytoplasm. Functionally, an accessory protein needed during the final step in the assembly of 30S ribosomal subunit, possibly for assembly of the head region. Essential for efficient processing of 16S rRNA. May be needed both before and after RbfA during the maturation of 16S rRNA. It has affinity for free ribosomal 30S subunits but not for 70S ribosomes. This Sodalis glossinidius (strain morsitans) protein is Ribosome maturation factor RimM.